Reading from the N-terminus, the 53-residue chain is UPF0391 membrane protein YPDSF_3201 (53 aa).

The next 2 helical transmembrane spans lie at 4-24 (WGII…GGLA) and 27-47 (AAWA…ISLF).

The protein belongs to the UPF0391 family.

The protein resides in the cell membrane. The polypeptide is UPF0391 membrane protein YPDSF_3201 (Yersinia pestis (strain Pestoides F)).